The chain runs to 370 residues: Protein STRICTOSIDINE SYNTHASE-LIKE 4 (370 aa).

An N-terminal signal peptide occupies residues 1–21 (MVLFFSTRFLFFSIFFPCLIS). Asn-101 carries an N-linked (GlcNAc...) asparagine glycan. Residue Tyr-303 is modified to Phosphotyrosine.

The protein belongs to the strictosidine synthase family.

The protein resides in the vacuole. The protein is Protein STRICTOSIDINE SYNTHASE-LIKE 4 of Arabidopsis thaliana (Mouse-ear cress).